A 470-amino-acid polypeptide reads, in one-letter code: Probable V-type proton ATPase subunit H 2 (470 aa).

This sequence belongs to the V-ATPase H subunit family. As to quaternary structure, V-ATPase is a heteromultimeric enzyme made up of two complexes: the ATP-hydrolytic V1 complex and the proton translocation V0 complex. The V1 complex consists of three catalytic AB heterodimers that form a heterohexamer, three peripheral stalks each consisting of EG heterodimers, one central rotor including subunits D and F, and the regulatory subunits C and H. The proton translocation complex V0 consists of the proton transport subunit a, a ring of proteolipid subunits c9c'', rotary subunit d, subunits e and f, and the accessory subunits vah-19/Ac45 and vah-20/PRR.

Functionally, subunit of the V1 complex of vacuolar(H+)-ATPase (V-ATPase), a multisubunit enzyme composed of a peripheral complex (V1) that hydrolyzes ATP and a membrane integral complex (V0) that translocates protons. V-ATPase is responsible for acidifying and maintaining the pH of intracellular compartments and in some cell types, is targeted to the plasma membrane, where it is responsible for acidifying the extracellular environment. Subunit H is essential for V-ATPase activity, but not for the assembly of the complex. The protein is Probable V-type proton ATPase subunit H 2 of Caenorhabditis elegans.